A 201-amino-acid chain; its full sequence is Small ribosomal subunit protein uS4 (201 aa).

The S4 RNA-binding domain occupies 91-155 (SRLDNVVYRA…STLPFQVARE (65 aa)).

The protein belongs to the universal ribosomal protein uS4 family. In terms of assembly, part of the 30S ribosomal subunit. Contacts protein S5. The interaction surface between S4 and S5 is involved in control of translational fidelity.

Its function is as follows. One of the primary rRNA binding proteins, it binds directly to 16S rRNA where it nucleates assembly of the body of the 30S subunit. With S5 and S12 plays an important role in translational accuracy. The protein is Small ribosomal subunit protein uS4 of Rhodococcus jostii (strain RHA1).